A 201-amino-acid chain; its full sequence is MELVVKDVQNVLSVSEIIFARDFNEALIHQVVIAYSASTRQGTRAQKSRAEVSGSGRKPWRQKGTGRARAGSFRSPIWRSGGVTFAAKPQEHSQKVNKKMYRGALKSIFSELIRQKRLIVFENFSLNAPKTKLLVQKLKDINLKNVLIVTNKIDNNLFLASRNLYSVDVKDVHSIDPVSLIAFDHVVITVEAVKRIEEILS.

The segment at 44-68 (RAQKSRAEVSGSGRKPWRQKGTGRA) is disordered.

The protein belongs to the universal ribosomal protein uL4 family. In terms of assembly, part of the 50S ribosomal subunit.

In terms of biological role, one of the primary rRNA binding proteins, this protein initially binds near the 5'-end of the 23S rRNA. It is important during the early stages of 50S assembly. It makes multiple contacts with different domains of the 23S rRNA in the assembled 50S subunit and ribosome. Its function is as follows. Forms part of the polypeptide exit tunnel. This Buchnera aphidicola subsp. Acyrthosiphon pisum (strain 5A) protein is Large ribosomal subunit protein uL4.